Reading from the N-terminus, the 113-residue chain is U11-theraphotoxin-Hhn1a (113 aa).

Positions Met-1–Ala-21 are cleaved as a signal peptide. Positions Asp-22 to Arg-74 are excised as a propeptide. The disordered stretch occupies residues Glu-61–Asp-83. Intrachain disulfides connect Cys-75–Cys-90, Cys-82–Cys-95, and Cys-89–Cys-110.

The protein belongs to the neurotoxin 14 (magi-1) family. 01 (HNTX-16) subfamily. In terms of tissue distribution, expressed by the venom gland.

Its subcellular location is the secreted. In terms of biological role, probable ion channel inhibitor. The protein is U11-theraphotoxin-Hhn1a of Cyriopagopus hainanus (Chinese bird spider).